The sequence spans 633 residues: Chaperone protein DnaK (633 aa).

Threonine 198 carries the post-translational modification Phosphothreonine; by autocatalysis.

This sequence belongs to the heat shock protein 70 family.

Acts as a chaperone. This Rhodopseudomonas palustris (strain BisA53) protein is Chaperone protein DnaK.